The following is a 237-amino-acid chain: Ubiquinone biosynthesis O-methyltransferase (237 aa).

The S-adenosyl-L-methionine site is built by R38, G58, D79, and M124.

This sequence belongs to the methyltransferase superfamily. UbiG/COQ3 family.

It carries out the reaction a 3-demethylubiquinol + S-adenosyl-L-methionine = a ubiquinol + S-adenosyl-L-homocysteine + H(+). The catalysed reaction is a 3-(all-trans-polyprenyl)benzene-1,2-diol + S-adenosyl-L-methionine = a 2-methoxy-6-(all-trans-polyprenyl)phenol + S-adenosyl-L-homocysteine + H(+). The protein operates within cofactor biosynthesis; ubiquinone biosynthesis. Functionally, O-methyltransferase that catalyzes the 2 O-methylation steps in the ubiquinone biosynthetic pathway. In Acinetobacter baumannii (strain AB307-0294), this protein is Ubiquinone biosynthesis O-methyltransferase.